The following is a 27-amino-acid chain: Metallothionein-like protein CAP5 (27 aa).

Low complexity predominate over residues 1-18 (MAPCSCKSCGTSCAGSCT). The disordered stretch occupies residues 1–27 (MAPCSCKSCGTSCAGSCTSCSCGSCSH). Cu(+)-binding residues include Cys4, Cys6, Cys9, Cys13, Cys20, Cys22, and Cys25.

It belongs to the metallothionein superfamily. Type 8 family.

The protein is Metallothionein-like protein CAP5 (CAP5) of Colletotrichum gloeosporioides (Anthracnose fungus).